We begin with the raw amino-acid sequence, 208 residues long: Fibroblast growth factor 6 (208 aa).

Positions 1 to 37 (MALGQKLFITMSRGAGRLQGTLWALVFLGILVGMVVP) are cleaved as a signal peptide. Residue Asn45 is glycosylated (N-linked (GlcNAc...) asparagine). A disulfide bridge connects residues Cys90 and Cys157.

It belongs to the heparin-binding growth factors family. As to quaternary structure, interacts with FGFR1, FGFR2 and FGFR4. Affinity between fibroblast growth factors (FGFs) and their receptors is increased by heparan sulfate glycosaminoglycans that function as coreceptors. Leukemia cell lines with platelet/ megakaryocytic differentiation potential.

The protein resides in the secreted. The protein localises to the extracellular space. Its function is as follows. Plays an important role in the regulation of cell proliferation, cell differentiation, angiogenesis and myogenesis, and is required for normal muscle regeneration. The polypeptide is Fibroblast growth factor 6 (FGF6) (Homo sapiens (Human)).